The sequence spans 119 residues: Large ribosomal subunit protein uL18 (119 aa).

It belongs to the universal ribosomal protein uL18 family. Part of the 50S ribosomal subunit; part of the 5S rRNA/L5/L18/L25 subcomplex. Contacts the 5S and 23S rRNAs.

In terms of biological role, this is one of the proteins that bind and probably mediate the attachment of the 5S RNA into the large ribosomal subunit, where it forms part of the central protuberance. The chain is Large ribosomal subunit protein uL18 from Xanthomonas axonopodis pv. citri (strain 306).